A 191-amino-acid chain; its full sequence is dCTP deaminase, dUMP-forming (191 aa).

Residues 101-106 (KSSLGR), Asp119, 127-129 (TLE), Gln148, Tyr162, and Gln174 contribute to the dCTP site. Glu129 (proton donor/acceptor) is an active-site residue. Positions 169–191 (SRYQGQRGPTASRSFQNFHRTQV) are disordered. Over residues 171–191 (YQGQRGPTASRSFQNFHRTQV) the composition is skewed to polar residues.

This sequence belongs to the dCTP deaminase family. Homotrimer.

The catalysed reaction is dCTP + 2 H2O = dUMP + NH4(+) + diphosphate. The protein operates within pyrimidine metabolism; dUMP biosynthesis; dUMP from dCTP: step 1/1. Bifunctional enzyme that catalyzes both the deamination of dCTP to dUTP and the hydrolysis of dUTP to dUMP without releasing the toxic dUTP intermediate. This is dCTP deaminase, dUMP-forming from Streptomyces griseus subsp. griseus (strain JCM 4626 / CBS 651.72 / NBRC 13350 / KCC S-0626 / ISP 5235).